The following is a 333-amino-acid chain: Aspartate carbamoyltransferase catalytic subunit (333 aa).

Arginine 61 and threonine 62 together coordinate carbamoyl phosphate. Lysine 89 provides a ligand contact to L-aspartate. Positions 111, 144, and 147 each coordinate carbamoyl phosphate. The L-aspartate site is built by arginine 184 and arginine 248. Positions 289 and 290 each coordinate carbamoyl phosphate.

This sequence belongs to the aspartate/ornithine carbamoyltransferase superfamily. ATCase family. As to quaternary structure, heterododecamer (2C3:3R2) of six catalytic PyrB chains organized as two trimers (C3), and six regulatory PyrI chains organized as three dimers (R2).

The enzyme catalyses carbamoyl phosphate + L-aspartate = N-carbamoyl-L-aspartate + phosphate + H(+). It functions in the pathway pyrimidine metabolism; UMP biosynthesis via de novo pathway; (S)-dihydroorotate from bicarbonate: step 2/3. Functionally, catalyzes the condensation of carbamoyl phosphate and aspartate to form carbamoyl aspartate and inorganic phosphate, the committed step in the de novo pyrimidine nucleotide biosynthesis pathway. The sequence is that of Aspartate carbamoyltransferase catalytic subunit from Trichormus variabilis (strain ATCC 29413 / PCC 7937) (Anabaena variabilis).